A 943-amino-acid polypeptide reads, in one-letter code: Isoleucine--tRNA ligase (943 aa).

The 'HIGH' region motif lies at 58-68 (PYANGNIHIGH). L-isoleucyl-5'-AMP is bound at residue Glu567. The 'KMSKS' region signature appears at 608-612 (KMSKS). Residue Lys611 participates in ATP binding. Residues Cys906, Cys909, Cys926, and Cys929 each contribute to the Zn(2+) site.

The protein belongs to the class-I aminoacyl-tRNA synthetase family. IleS type 1 subfamily. Monomer. Zn(2+) serves as cofactor.

The protein localises to the cytoplasm. It carries out the reaction tRNA(Ile) + L-isoleucine + ATP = L-isoleucyl-tRNA(Ile) + AMP + diphosphate. In terms of biological role, catalyzes the attachment of isoleucine to tRNA(Ile). As IleRS can inadvertently accommodate and process structurally similar amino acids such as valine, to avoid such errors it has two additional distinct tRNA(Ile)-dependent editing activities. One activity is designated as 'pretransfer' editing and involves the hydrolysis of activated Val-AMP. The other activity is designated 'posttransfer' editing and involves deacylation of mischarged Val-tRNA(Ile). The protein is Isoleucine--tRNA ligase of Azotobacter vinelandii (strain DJ / ATCC BAA-1303).